Reading from the N-terminus, the 465-residue chain is UDP-glucose:undecaprenyl-phosphate glucose-1-phosphate transferase (465 aa).

5 consecutive transmembrane segments (helical) span residues 23–43 (FSDILIIFLGIYFSCFINDYF), 46–66 (LHYVLMALVALVVFQMIGGIT), 82–102 (ILILKNWSLSFLLTLGFVTLF), 105–125 (FDLTFRTFIFWYLAVCAGFVV), and 280–300 (IIVSSLILILISPILLVIATA).

This sequence belongs to the bacterial sugar transferase family.

The protein localises to the cell inner membrane. It carries out the reaction di-trans,octa-cis-undecaprenyl phosphate + UDP-alpha-D-glucose = alpha-D-glucosyl di-trans,octa-cis-undecaprenyl diphosphate + UMP. It functions in the pathway capsule biogenesis; capsule polysaccharide biosynthesis. Its function is as follows. Is likely the initiating enzyme for the K2 capsular polysaccharide synthesis. Catalyzes the transfer of the glucose-1-phosphate moiety from UDP-Glc onto the carrier lipid undecaprenyl phosphate (C55-P), forming a phosphoanhydride bond yielding to glucosyl-pyrophosphoryl-undecaprenol (Glc-PP-C55). This chain is UDP-glucose:undecaprenyl-phosphate glucose-1-phosphate transferase, found in Klebsiella pneumoniae.